The following is a 267-amino-acid chain: MFSTGTVWKNVAAVRQRAPIIHSITNFVVMNTTANALLAAGASPIMAHAPEEMAEMAGIASALVLNIGTLTKPWVESMMLAGMAARERRLPVVLDPVGAGASSLRTTTALEILEKVRPAVVRGNGSEILALAGAAGDTRGVDSARTAHEAVDGARALARRYGAVVVVSGAEDVVTDGDALWLVRGGSPLMPRVTGMGCTATVLVAAHVAVAADVLEGAVTGMAAMSAAGALAARRSQGPGSFQVAFLDVLHSLDLVTVRDEVEVVRA.

Substrate is bound at residue Met46. Residues Arg122 and Ser168 each contribute to the ATP site. Gly195 serves as a coordination point for substrate.

It belongs to the Thz kinase family. It depends on Mg(2+) as a cofactor.

The enzyme catalyses 5-(2-hydroxyethyl)-4-methylthiazole + ATP = 4-methyl-5-(2-phosphooxyethyl)-thiazole + ADP + H(+). The protein operates within cofactor biosynthesis; thiamine diphosphate biosynthesis; 4-methyl-5-(2-phosphoethyl)-thiazole from 5-(2-hydroxyethyl)-4-methylthiazole: step 1/1. Catalyzes the phosphorylation of the hydroxyl group of 4-methyl-5-beta-hydroxyethylthiazole (THZ). The chain is Hydroxyethylthiazole kinase from Nitratidesulfovibrio vulgaris (strain DP4) (Desulfovibrio vulgaris).